A 181-amino-acid chain; its full sequence is UPF0398 protein lin2003 (181 aa).

Belongs to the UPF0398 family.

This chain is UPF0398 protein lin2003, found in Listeria innocua serovar 6a (strain ATCC BAA-680 / CLIP 11262).